The sequence spans 189 residues: ATP synthase subunit b (189 aa).

The chain crosses the membrane as a helical span at residues 38–58 (PMFLATLIAFILVVLILWFLL).

It belongs to the ATPase B chain family. In terms of assembly, F-type ATPases have 2 components, F(1) - the catalytic core - and F(0) - the membrane proton channel. F(1) has five subunits: alpha(3), beta(3), gamma(1), delta(1), epsilon(1). F(0) has three main subunits: a(1), b(2) and c(10-14). The alpha and beta chains form an alternating ring which encloses part of the gamma chain. F(1) is attached to F(0) by a central stalk formed by the gamma and epsilon chains, while a peripheral stalk is formed by the delta and b chains.

It is found in the cell membrane. F(1)F(0) ATP synthase produces ATP from ADP in the presence of a proton or sodium gradient. F-type ATPases consist of two structural domains, F(1) containing the extramembraneous catalytic core and F(0) containing the membrane proton channel, linked together by a central stalk and a peripheral stalk. During catalysis, ATP synthesis in the catalytic domain of F(1) is coupled via a rotary mechanism of the central stalk subunits to proton translocation. Functionally, component of the F(0) channel, it forms part of the peripheral stalk, linking F(1) to F(0). In Mycoplasmopsis agalactiae (strain NCTC 10123 / CIP 59.7 / PG2) (Mycoplasma agalactiae), this protein is ATP synthase subunit b.